A 746-amino-acid chain; its full sequence is NAD(P)H-quinone oxidoreductase subunit 5, chloroplastic (746 aa).

Helical transmembrane passes span 9 to 29, 40 to 60, 89 to 109, 125 to 145, 147 to 167, 185 to 205, 221 to 241, 258 to 278, 280 to 300, 327 to 347, 354 to 374, 396 to 416, 425 to 445, 547 to 567, 608 to 628, and 723 to 743; these read WIIPFIPLPVPILLGVGLLLF, WTFLSIFLLSIVMIFSLYLSI, IDPLTSIMSILITTVGILVLI, FAYMGFFNTSMLGLVTSSNLI, VYFFWELVGMCSYLLIGFWFT, GDFGLLLGILGLYWITGSFEF, VNLLFLTLCAFLLFVGPIAKS, TPISALIHAATMVAAGIFLVA, LLPLFIVIPSIMYIISLIGII, LGYMMLALGMGSYRSALFHLI, ALLFLGSGSIIHSMEAIVGYS, TAFLVGTLSLCGIPPLACFWS, LLFSPIFAIIACSTAGLTAFY, ILFPMLVLLLFTLFIGAIGIP, FSVSIAVFGIFIAYCLYKPFY, and YLFLYLSYVLIFLMILFFFYF.

Belongs to the complex I subunit 5 family. As to quaternary structure, NDH is composed of at least 16 different subunits, 5 of which are encoded in the nucleus.

The protein localises to the plastid. The protein resides in the chloroplast thylakoid membrane. It catalyses the reaction a plastoquinone + NADH + (n+1) H(+)(in) = a plastoquinol + NAD(+) + n H(+)(out). The catalysed reaction is a plastoquinone + NADPH + (n+1) H(+)(in) = a plastoquinol + NADP(+) + n H(+)(out). NDH shuttles electrons from NAD(P)H:plastoquinone, via FMN and iron-sulfur (Fe-S) centers, to quinones in the photosynthetic chain and possibly in a chloroplast respiratory chain. The immediate electron acceptor for the enzyme in this species is believed to be plastoquinone. Couples the redox reaction to proton translocation, and thus conserves the redox energy in a proton gradient. The protein is NAD(P)H-quinone oxidoreductase subunit 5, chloroplastic (ndhF) of Crucihimalaya wallichii (Rock-cress).